A 211-amino-acid chain; its full sequence is Small ribosomal subunit protein uS3 (211 aa).

Positions 16-85 (IDEYFKTKLV…NPQIEVKQVE (70 aa)) constitute a KH type-2 domain.

It belongs to the universal ribosomal protein uS3 family. Part of the 30S ribosomal subunit.

Binds the lower part of the 30S subunit head. The chain is Small ribosomal subunit protein uS3 from Methanococcus maripaludis (strain C7 / ATCC BAA-1331).